Reading from the N-terminus, the 209-residue chain is Orotate phosphoribosyltransferase (209 aa).

Residues Arg-96, Lys-100, His-102, and 122 to 130 contribute to the 5-phospho-alpha-D-ribose 1-diphosphate site; that span reads EDLISTGGS. Ser-126 contacts orotate.

Belongs to the purine/pyrimidine phosphoribosyltransferase family. PyrE subfamily. In terms of assembly, homodimer. Mg(2+) is required as a cofactor.

It carries out the reaction orotidine 5'-phosphate + diphosphate = orotate + 5-phospho-alpha-D-ribose 1-diphosphate. It participates in pyrimidine metabolism; UMP biosynthesis via de novo pathway; UMP from orotate: step 1/2. Catalyzes the transfer of a ribosyl phosphate group from 5-phosphoribose 1-diphosphate to orotate, leading to the formation of orotidine monophosphate (OMP). The protein is Orotate phosphoribosyltransferase of Streptococcus gordonii (strain Challis / ATCC 35105 / BCRC 15272 / CH1 / DL1 / V288).